The primary structure comprises 443 residues: tRNA-2-methylthio-N(6)-dimethylallyladenosine synthase (443 aa).

The MTTase N-terminal domain occupies 3-120; the sequence is SKLYIKTFGC…LPELIDARRR (118 aa). 6 residues coordinate [4Fe-4S] cluster: cysteine 12, cysteine 49, cysteine 83, cysteine 157, cysteine 161, and cysteine 164. Positions 143–377 constitute a Radical SAM core domain; that stretch reads RTTGATAFVS…KIQRNAQMIS (235 aa). The 64-residue stretch at 378–441 folds into the TRAM domain; the sequence is QSMVDTIQRV…SHTLRGEISD (64 aa).

This sequence belongs to the methylthiotransferase family. MiaB subfamily. As to quaternary structure, monomer. [4Fe-4S] cluster serves as cofactor.

The protein resides in the cytoplasm. The enzyme catalyses N(6)-dimethylallyladenosine(37) in tRNA + (sulfur carrier)-SH + AH2 + 2 S-adenosyl-L-methionine = 2-methylsulfanyl-N(6)-dimethylallyladenosine(37) in tRNA + (sulfur carrier)-H + 5'-deoxyadenosine + L-methionine + A + S-adenosyl-L-homocysteine + 2 H(+). In terms of biological role, catalyzes the methylthiolation of N6-(dimethylallyl)adenosine (i(6)A), leading to the formation of 2-methylthio-N6-(dimethylallyl)adenosine (ms(2)i(6)A) at position 37 in tRNAs that read codons beginning with uridine. The sequence is that of tRNA-2-methylthio-N(6)-dimethylallyladenosine synthase from Nitrosomonas eutropha (strain DSM 101675 / C91 / Nm57).